The chain runs to 472 residues: Collagenase 3 (472 aa).

An N-terminal signal peptide occupies residues 1–19 (MHPGVLAAFLFLSWTRCWS). Positions 20–104 (LPVPNDDDDD…PRCGVPDVGE (85 aa)) are cleaved as a propeptide — activation peptide. The Cysteine switch motif lies at 95–102 (PRCGVPDV). Cys-97 is a Zn(2+) binding site. Asn-118 carries N-linked (GlcNAc...) asparagine glycosylation. Residue Asp-129 coordinates Ca(2+). Asn-153 and Asn-159 each carry an N-linked (GlcNAc...) asparagine glycan. Residue Asp-163 coordinates Ca(2+). Positions 173 and 175 each coordinate Zn(2+). Residues 177-247 (YPFDGPSGLL…GALMFPIYTY (71 aa)) form an interaction with TIMP2 region. The Ca(2+) site is built by Asp-180, Gly-181, Ser-183, and Leu-185. His-188 contributes to the Zn(2+) binding site. Asn-195, Gly-197, and Asp-199 together coordinate Ca(2+). His-201 contacts Zn(2+). Positions 203, 204, and 206 each coordinate Ca(2+). His-223 provides a ligand contact to Zn(2+). Glu-224 is an active-site residue. Residues His-227, His-233, and Met-241 each contribute to the Zn(2+) site. The interval 269 to 472 (PGDEDPNPKH…VMPTNSLLWC (204 aa)) is interaction with collagen. Hemopexin repeat units follow at residues 282–331 (PDKC…WPEL), 332–378 (PNRI…GFPK), 380–428 (VKKI…FPGI), and 429–472 (GDKV…LLWC). A disulfide bridge links Cys-285 with Cys-472. Ca(2+)-binding residues include Asp-292, Ile-294, Asp-336, and Ala-338. At Tyr-367 the chain carries Phosphotyrosine; by PKDCC. Ca(2+) contacts are provided by Ser-384, Ala-386, Asp-433, and Val-435.

This sequence belongs to the peptidase M10A family. Ca(2+) is required as a cofactor. Requires Zn(2+) as cofactor. In terms of processing, the proenzyme is activated by removal of the propeptide; this cleavage can be effected by other matrix metalloproteinases, such as MMP2, MMP3 and MMP14 and may involve several cleavage steps. Cleavage can also be autocatalytic, after partial maturation by another protease or after treatment with 4-aminophenylmercuric acetate (APMA) (in vitro). Post-translationally, N-glycosylated. Tyrosine phosphorylated by PKDCC/VLK. In terms of tissue distribution, seems to be specific to breast carcinomas.

The protein resides in the secreted. The protein localises to the extracellular space. Its subcellular location is the extracellular matrix. Its function is as follows. Plays a role in the degradation of extracellular matrix proteins including fibrillar collagen, fibronectin, TNC and ACAN. Cleaves triple helical collagens, including type I, type II and type III collagen, but has the highest activity with soluble type II collagen. Can also degrade collagen type IV, type XIV and type X. May also function by activating or degrading key regulatory proteins, such as TGFB1 and CCN2. Plays a role in wound healing, tissue remodeling, cartilage degradation, bone development, bone mineralization and ossification. Required for normal embryonic bone development and ossification. Plays a role in the healing of bone fractures via endochondral ossification. Plays a role in wound healing, probably by a mechanism that involves proteolytic activation of TGFB1 and degradation of CCN2. Plays a role in keratinocyte migration during wound healing. May play a role in cell migration and in tumor cell invasion. The protein is Collagenase 3 (MMP13) of Equus caballus (Horse).